Reading from the N-terminus, the 100-residue chain is Urease subunit gamma (100 aa).

This sequence belongs to the urease gamma subunit family. As to quaternary structure, heterotrimer of UreA (gamma), UreB (beta) and UreC (alpha) subunits. Three heterotrimers associate to form the active enzyme.

It is found in the cytoplasm. The enzyme catalyses urea + 2 H2O + H(+) = hydrogencarbonate + 2 NH4(+). It functions in the pathway nitrogen metabolism; urea degradation; CO(2) and NH(3) from urea (urease route): step 1/1. The protein is Urease subunit gamma of Flavobacterium johnsoniae (strain ATCC 17061 / DSM 2064 / JCM 8514 / BCRC 14874 / CCUG 350202 / NBRC 14942 / NCIMB 11054 / UW101) (Cytophaga johnsonae).